We begin with the raw amino-acid sequence, 307 residues long: Aspartate carbamoyltransferase catalytic subunit (307 aa).

Residues Arg54 and Thr55 each coordinate carbamoyl phosphate. An L-aspartate-binding site is contributed by Lys83. Carbamoyl phosphate is bound by residues Arg104, His132, and Gln135. 2 residues coordinate L-aspartate: Arg165 and Arg228. Leu267 and Pro268 together coordinate carbamoyl phosphate.

It belongs to the aspartate/ornithine carbamoyltransferase superfamily. ATCase family. Heterododecamer (2C3:3R2) of six catalytic PyrB chains organized as two trimers (C3), and six regulatory PyrI chains organized as three dimers (R2).

It carries out the reaction carbamoyl phosphate + L-aspartate = N-carbamoyl-L-aspartate + phosphate + H(+). It functions in the pathway pyrimidine metabolism; UMP biosynthesis via de novo pathway; (S)-dihydroorotate from bicarbonate: step 2/3. In terms of biological role, catalyzes the condensation of carbamoyl phosphate and aspartate to form carbamoyl aspartate and inorganic phosphate, the committed step in the de novo pyrimidine nucleotide biosynthesis pathway. This is Aspartate carbamoyltransferase catalytic subunit from Clostridium botulinum (strain ATCC 19397 / Type A).